Consider the following 322-residue polypeptide: MQYVGIQTQQSRNNLRSGILLILFPCLVAVLTYLFCYLLITFTVEDDYGQYNTLAMTNQMFINLIPYIIGGVLVWFIIAYFTNSSIIKAATGARPLERKENKRIYNLVENLCMSQGMKMPKINIIDDDSLNAYASGINEQTYTVTLSKGIIEKLNDEELEGVIAHELTHIRNHDVRLLIISIVFVGIFSMLAQIALRSVYYSSWTRSRNDKNNGAILILVLAMIVAAIGYFFATLMRFAISRKREYMADAGAAEMTKNPLALASALRKISADPDIEAVEREDVAQLFIQHPGKQAKSALSGLSGLFATHPPIEKRIAILEQF.

2 consecutive transmembrane segments (helical) span residues 19 to 39 and 61 to 81; these read ILLILFPCLVAVLTYLFCYLL and FINLIPYIIGGVLVWFIIAYF. His-165 contacts Zn(2+). Residue Glu-166 is part of the active site. Residue His-169 participates in Zn(2+) binding. The next 2 helical transmembrane spans lie at 175-195 and 216-236; these read VRLLIISIVFVGIFSMLAQIA and ILILVLAMIVAAIGYFFATLM. Zn(2+) is bound at residue Glu-245.

Belongs to the peptidase M48B family. Requires Zn(2+) as cofactor.

Its subcellular location is the cell inner membrane. This chain is Protease HtpX homolog, found in Bacteroides fragilis (strain ATCC 25285 / DSM 2151 / CCUG 4856 / JCM 11019 / LMG 10263 / NCTC 9343 / Onslow / VPI 2553 / EN-2).